Here is a 76-residue protein sequence, read N- to C-terminus: MSAFTFSPSRHDGPGTEVYGRPPGILSAQLSYPAAAPPAVFFPGADFPGTYSFRSYPQNLWITVAPLLREKALLTA.

This is an uncharacterized protein from Escherichia coli (strain K12).